Consider the following 358-residue polypeptide: 4-hydroxy-3-methylbut-2-en-1-yl diphosphate synthase (flavodoxin) (358 aa).

Residues cysteine 270, cysteine 273, cysteine 305, and glutamate 312 each contribute to the [4Fe-4S] cluster site.

Belongs to the IspG family. It depends on [4Fe-4S] cluster as a cofactor.

The catalysed reaction is (2E)-4-hydroxy-3-methylbut-2-enyl diphosphate + oxidized [flavodoxin] + H2O + 2 H(+) = 2-C-methyl-D-erythritol 2,4-cyclic diphosphate + reduced [flavodoxin]. Its pathway is isoprenoid biosynthesis; isopentenyl diphosphate biosynthesis via DXP pathway; isopentenyl diphosphate from 1-deoxy-D-xylulose 5-phosphate: step 5/6. Its function is as follows. Converts 2C-methyl-D-erythritol 2,4-cyclodiphosphate (ME-2,4cPP) into 1-hydroxy-2-methyl-2-(E)-butenyl 4-diphosphate. This Ruthia magnifica subsp. Calyptogena magnifica protein is 4-hydroxy-3-methylbut-2-en-1-yl diphosphate synthase (flavodoxin).